A 527-amino-acid polypeptide reads, in one-letter code: Catalase (527 aa).

Basic and acidic residues predominate over residues 1 to 22; it reads MADNRDPASDQMKHWKEQRAAQ. Positions 1-42 are disordered; it reads MADNRDPASDQMKHWKEQRAAQKPDVLTTGGGNPVGDKLNSL. Blocked amino end (Ala); alternate is present on A2. At A2 the chain carries N-acetylalanine; alternate. Position 9 is a phosphoserine (S9). N6-succinyllysine is present on K13. Catalysis depends on residues H75 and N148. H194, F198, S201, R203, N213, and Y215 together coordinate NADP(+). K221 bears the N6-succinyllysine mark. K233 carries the post-translational modification N6-acetyllysine. Positions 237, 303, and 305 each coordinate NADP(+). Heme is bound at residue Y358. S417 and S434 each carry phosphoserine. Residues Q442, T445, and F446 each contribute to the NADP(+) site. N6-acetyllysine; alternate is present on residues K449 and K480. An N6-succinyllysine; alternate mark is found at K449 and K480. K499 is modified (N6-acetyllysine). T511 carries the phosphothreonine modification. At S517 the chain carries Phosphoserine. The Microbody targeting signal; atypical signature appears at 524 to 527; the sequence is KANL.

This sequence belongs to the catalase family. In terms of assembly, homotetramer. Interacts (via microbody targeting signal) with PEX5, monomeric form interacts with PEX5, leading to its translocation into peroxisomes. Requires heme as cofactor. NADP(+) serves as cofactor.

The protein resides in the peroxisome matrix. The enzyme catalyses 2 H2O2 = O2 + 2 H2O. Functionally, catalyzes the degradation of hydrogen peroxide (H(2)O(2)) generated by peroxisomal oxidases to water and oxygen, thereby protecting cells from the toxic effects of hydrogen peroxide. Promotes growth of cells including T-cells, B-cells, myeloid leukemia cells, melanoma cells, mastocytoma cells and normal and transformed fibroblast cells. The sequence is that of Catalase (CAT) from Bos taurus (Bovine).